Here is a 493-residue protein sequence, read N- to C-terminus: MHEIVTLQLGQRANYLATHFWNLQESYFTYNGEEESPVDHDVHFRPGVGADGTETFTPRTVIYDLKGAFGTLRKYNALYELTEDANLGQGLWDGKEVIQQQTPISQSDYQKNLDAGLPAPKLTTETVRYWSDYNRLFYHPRSIVQLNDYELNSMIMPFEDWSVGEDLFSDLDKEHDLLDRDVRPFAEECDQLRAIQLFTSSDDAWGGFSARYVDRLRDEFGKKSIWVWAIEGGSRVSRQTQLKRDMNKARTIYSISPQSSLYTPIIDPPSHTLSKVHFDPHSEWHTTALISSAMESVTLPTRLRQFHDFESSLAGDDGTHKIFELQSSVTADDGGNRQHLPVKGPLTETNASEQGAAKSQAKFELDFTYDGRGSSNSHIFNQLQVWRGTNLDQDKGSVAQEDIGLSRKQRYYNSAPMFQSYPSHMFSGAKQNKINVLAALTASSRTAERIKVLETVAGRIIGVDERETLVNGLGEIRESYETGWSNDSDFNDI.

It belongs to the misato family.

The protein localises to the mitochondrion. Involved in the partitioning of the mitochondrial organelle and mitochondrial DNA (mtDNA) inheritance. In Aspergillus oryzae (strain ATCC 42149 / RIB 40) (Yellow koji mold), this protein is Protein dml1 (dml1).